Consider the following 644-residue polypeptide: Exoribonuclease 2 (644 aa).

In terms of domain architecture, RNB spans Arg189–Lys516. Residues Asp561–Val643 form the S1 motif domain.

Belongs to the RNR ribonuclease family. RNase II subfamily.

The protein localises to the cytoplasm. It catalyses the reaction Exonucleolytic cleavage in the 3'- to 5'-direction to yield nucleoside 5'-phosphates.. Involved in mRNA degradation. Hydrolyzes single-stranded polyribonucleotides processively in the 3' to 5' direction. This chain is Exoribonuclease 2, found in Escherichia coli O127:H6 (strain E2348/69 / EPEC).